The primary structure comprises 156 residues: Large ribosomal subunit protein eL24 (156 aa).

Residues 87–156 (LELIKERRSQ…AFQKVHATSR (70 aa)) are disordered. A compositionally biased stretch (basic and acidic residues) spans 89-129 (LIKERRSQKPSDRKAARDVKLAKDKEAKKADKAARKAEKAK). Residues 130-147 (SAAAGAQSKVSKQQSKGA) are compositionally biased toward low complexity.

It belongs to the eukaryotic ribosomal protein eL24 family.

This Debaryomyces hansenii (strain ATCC 36239 / CBS 767 / BCRC 21394 / JCM 1990 / NBRC 0083 / IGC 2968) (Yeast) protein is Large ribosomal subunit protein eL24 (RPL24).